The following is an 888-amino-acid chain: Translation initiation factor IF-2 (888 aa).

2 disordered regions span residues threonine 96–glutamate 122 and glutamate 158–threonine 302. Basic and acidic residues-rich tracts occupy residues lysine 98 to serine 114 and glutamate 158 to arginine 167. Residues threonine 181–glutamate 206 are compositionally biased toward polar residues. Over residues threonine 207–alanine 225 the composition is skewed to low complexity. Basic and acidic residues-rich tracts occupy residues alanine 226–glutamate 243 and glutamate 253–glycine 269. The tr-type G domain occupies serine 390–lysine 559. The segment at glycine 399 to threonine 406 is G1. GTP is bound at residue glycine 399–threonine 406. Residues glycine 424–histidine 428 form a G2 region. Positions aspartate 445–glycine 448 are G3. GTP is bound by residues aspartate 445–histidine 449 and asparagine 499–aspartate 502. A G4 region spans residues asparagine 499–aspartate 502. A G5 region spans residues serine 535–lysine 537.

This sequence belongs to the TRAFAC class translation factor GTPase superfamily. Classic translation factor GTPase family. IF-2 subfamily.

The protein localises to the cytoplasm. One of the essential components for the initiation of protein synthesis. Protects formylmethionyl-tRNA from spontaneous hydrolysis and promotes its binding to the 30S ribosomal subunits. Also involved in the hydrolysis of GTP during the formation of the 70S ribosomal complex. This Nitrosomonas eutropha (strain DSM 101675 / C91 / Nm57) protein is Translation initiation factor IF-2.